Reading from the N-terminus, the 556-residue chain is Cytochrome P450 4g1 (556 aa).

The heme site is built by glutamate 356 and cysteine 497.

The protein belongs to the cytochrome P450 family. It depends on heme as a cofactor.

It localises to the endoplasmic reticulum membrane. The protein resides in the microsome membrane. In terms of biological role, may be involved in the metabolism of insect hormones and in the breakdown of synthetic insecticides. The sequence is that of Cytochrome P450 4g1 (Cyp4g1) from Drosophila melanogaster (Fruit fly).